A 273-amino-acid polypeptide reads, in one-letter code: Dermonecrotic toxin LapSicTox-alphaIB1aii (273 aa).

Histidine 5 is an active-site residue. Glutamate 25 and aspartate 27 together coordinate Mg(2+). The Nucleophile role is filled by histidine 41. Disulfide bonds link cysteine 45-cysteine 51 and cysteine 47-cysteine 190. Position 85 (aspartate 85) interacts with Mg(2+). Asparagine 250 is a glycosylation site (N-linked (GlcNAc...) asparagine).

It belongs to the arthropod phospholipase D family. Class II subfamily. Mg(2+) serves as cofactor. As to expression, expressed by the venom gland.

It localises to the secreted. The enzyme catalyses an N-(acyl)-sphingosylphosphocholine = an N-(acyl)-sphingosyl-1,3-cyclic phosphate + choline. It carries out the reaction an N-(acyl)-sphingosylphosphoethanolamine = an N-(acyl)-sphingosyl-1,3-cyclic phosphate + ethanolamine. The catalysed reaction is a 1-acyl-sn-glycero-3-phosphocholine = a 1-acyl-sn-glycero-2,3-cyclic phosphate + choline. It catalyses the reaction a 1-acyl-sn-glycero-3-phosphoethanolamine = a 1-acyl-sn-glycero-2,3-cyclic phosphate + ethanolamine. Dermonecrotic toxins cleave the phosphodiester linkage between the phosphate and headgroup of certain phospholipids (sphingolipid and lysolipid substrates), forming an alcohol (often choline) and a cyclic phosphate. This toxin acts on sphingomyelin (SM). It may also act on ceramide phosphoethanolamine (CPE), lysophosphatidylcholine (LPC) and lysophosphatidylethanolamine (LPE), but not on lysophosphatidylserine (LPS), and lysophosphatidylglycerol (LPG). It acts by transphosphatidylation, releasing exclusively cyclic phosphate products as second products. Induces dermonecrosis, hemolysis, increased vascular permeability, edema, inflammatory response, and platelet aggregation. In Loxosceles apachea (Apache recluse spider), this protein is Dermonecrotic toxin LapSicTox-alphaIB1aii.